A 263-amino-acid chain; its full sequence is 5'-nucleotidase SurE (263 aa).

A divalent metal cation-binding residues include D11, D12, S42, and N96.

It belongs to the SurE nucleotidase family. A divalent metal cation serves as cofactor.

The protein resides in the cytoplasm. The catalysed reaction is a ribonucleoside 5'-phosphate + H2O = a ribonucleoside + phosphate. Functionally, nucleotidase that shows phosphatase activity on nucleoside 5'-monophosphates. In Methanocorpusculum labreanum (strain ATCC 43576 / DSM 4855 / Z), this protein is 5'-nucleotidase SurE.